The chain runs to 816 residues: Chitin synthase 1 (816 aa).

The tract at residues 1-21 (MLSQGEILRNPSRTRLQRPPK) is disordered. At 1-32 (MLSQGEILRNPSRTRLQRPPKSRSERKGWWYR) the chain is on the cytoplasmic side. A helical membrane pass occupies residues 33-53 (VTIFLTCLIPNFMLRCFGMTT). Residues 54 to 63 (PEVQHAWREK) lie on the Extracellular side of the membrane. A helical transmembrane segment spans residues 64 to 84 (VALCICIFFCWIILGFTTYGM). Residues 85–240 (NTIICKGSNQ…TPGCLLADTM (156 aa)) lie on the Cytoplasmic side of the membrane. The chain crosses the membrane as a helical span at residues 241 to 261 (FWITTISIFGLIITKFLLGFF). Residues 262–697 (YSWYAKRRPK…QLVVVMELFG (436 aa)) lie on the Extracellular side of the membrane. Residues Asn319 and Asn664 are each glycosylated (N-linked (GlcNAc...) asparagine). A helical transmembrane segment spans residues 698–718 (TLVLPAAIIFTFVMIAVSILI). At 719 to 720 (EP) the chain is on the cytoplasmic side. A helical membrane pass occupies residues 721 to 741 (AWVPLIMLVGIFGLPAVLILI). Over 742 to 745 (TTME) the chain is Extracellular. A helical transmembrane segment spans residues 746–766 (IQYVFWCLVYILSIPIWNFVL). Residues 767 to 816 (PTYAFWHFDNFSWGDTRKVDGEGKEDEEGEFDHTKIRIRELEEFLSEANK) lie on the Cytoplasmic side of the membrane.

This sequence belongs to the chitin synthase family. Class IV subfamily.

Its subcellular location is the cell membrane. It carries out the reaction [(1-&gt;4)-N-acetyl-beta-D-glucosaminyl](n) + UDP-N-acetyl-alpha-D-glucosamine = [(1-&gt;4)-N-acetyl-beta-D-glucosaminyl](n+1) + UDP + H(+). Polymerizes chitin, a structural polymer of the cell wall and septum, by transferring the sugar moiety of UDP-GlcNAc to the non-reducing end of the growing chitin polymer. The protein is Chitin synthase 1 (CHS1) of Encephalitozoon cuniculi (strain GB-M1) (Microsporidian parasite).